Reading from the N-terminus, the 5061-residue chain is E3 ubiquitin-protein ligase rnf213-beta (5061 aa).

Positions 1–12 (MTRKRKSGKKGK) are enriched in basic residues. The interval 1 to 334 (MTRKRKSGKK…QRKPSPVRAP (334 aa)) is disordered. Polar residues-rich tracts occupy residues 24–52 (GGST…TQKD) and 75–87 (SDGS…TNKE). The span at 100 to 110 (LQKKGPQKRKG) shows a compositional bias: basic residues. 2 stretches are compositionally biased toward polar residues: residues 127-163 (QTSY…TSAS) and 172-200 (TETV…QPPQ). Basic and acidic residues-rich tracts occupy residues 217–229 (KGSE…EESV) and 236–289 (LSEI…EEPK). Low complexity predominate over residues 292–301 (AAAAATGKTG). A compositionally biased stretch (polar residues) spans 306 to 322 (EQTNQIEANQDSTMESK). Residues 1923–1928 (AVGKSL), Glu2023, Asp2074, Lys2417, and Ser2492 each bind ATP. Residues Cys3957, Cys3960, Cys3972, His3974, Cys3977, Cys3980, Cys3993, Cys3996, Cys4451, and His4455 each contribute to the Zn(2+) site. The segment at 3957–3997 (CRVCLMELSEPFALPCEHVFCRSCLRRSMEREEAQHCPVCR) adopts an RING-type zinc-finger fold. The RZ-type zinc-finger motif lies at 4429-4501 (MPDDHTSEAK…AYGDYDRTRP (73 aa)). Cys4462 serves as the catalytic Nucleophile; for E3 ubiquitin-lipopolysaccharide ligase activity. The Zn(2+) site is built by Cys4471 and Cys4474.

The protein belongs to the AAA ATPase family.

The protein localises to the cytoplasm. It localises to the cytosol. The protein resides in the lipid droplet. It catalyses the reaction S-ubiquitinyl-[E2 ubiquitin-conjugating enzyme]-L-cysteine + [acceptor protein]-L-lysine = [E2 ubiquitin-conjugating enzyme]-L-cysteine + N(6)-ubiquitinyl-[acceptor protein]-L-lysine.. The enzyme catalyses ATP + H2O = ADP + phosphate + H(+). Its pathway is protein modification; protein ubiquitination. Functionally, atypical E3 ubiquitin ligase that can catalyze ubiquitination of both proteins and lipids, and which is involved in various processes, such as lipid metabolism, angiogenesis and cell-autonomous immunity. Acts as a key immune sensor by catalyzing ubiquitination of the lipid A moiety of bacterial lipopolysaccharide (LPS) via its RZ-type zinc-finger: restricts the proliferation of cytosolic bacteria, such as Salmonella, by generating the bacterial ubiquitin coat through the ubiquitination of LPS. Ubiquitination of LPS triggers cell-autonomous immunity, such as antibacterial autophagy, leading to degradation of the microbial invader. Involved in lipid metabolism by regulating fat storage and lipid droplet formation; act by inhibiting the lipolytic process. Also regulates lipotoxicity by inhibiting desaturation of fatty acids. Also acts as an E3 ubiquitin-protein ligase via its RING-type zinc finger. Involved in the non-canonical Wnt signaling pathway in vascular development: acts by mediating ubiquitination and degradation of proteins downstream of rspo3, leading to inhibit the non-canonical Wnt signaling pathway and promoting vessel regression. Also has ATPase activity; ATPase activity is required for ubiquitination of LPS. This chain is E3 ubiquitin-protein ligase rnf213-beta (rnf213b), found in Danio rerio (Zebrafish).